A 178-amino-acid polypeptide reads, in one-letter code: Acireductone dioxygenase (178 aa).

Residues histidine 100, histidine 102, glutamate 106, and histidine 145 each contribute to the Fe(2+) site. Residues histidine 100, histidine 102, glutamate 106, and histidine 145 each coordinate Ni(2+).

The protein belongs to the acireductone dioxygenase (ARD) family. Monomer. Requires Fe(2+) as cofactor. Ni(2+) serves as cofactor.

It carries out the reaction 1,2-dihydroxy-5-(methylsulfanyl)pent-1-en-3-one + O2 = 3-(methylsulfanyl)propanoate + CO + formate + 2 H(+). It catalyses the reaction 1,2-dihydroxy-5-(methylsulfanyl)pent-1-en-3-one + O2 = 4-methylsulfanyl-2-oxobutanoate + formate + 2 H(+). Its pathway is amino-acid biosynthesis; L-methionine biosynthesis via salvage pathway; L-methionine from S-methyl-5-thio-alpha-D-ribose 1-phosphate: step 5/6. Functionally, catalyzes 2 different reactions between oxygen and the acireductone 1,2-dihydroxy-3-keto-5-methylthiopentene (DHK-MTPene) depending upon the metal bound in the active site. Fe-containing acireductone dioxygenase (Fe-ARD) produces formate and 2-keto-4-methylthiobutyrate (KMTB), the alpha-ketoacid precursor of methionine in the methionine recycle pathway. Ni-containing acireductone dioxygenase (Ni-ARD) produces methylthiopropionate, carbon monoxide and formate, and does not lie on the methionine recycle pathway. The protein is Acireductone dioxygenase (mtnD) of Bacillus subtilis (strain 168).